A 329-amino-acid polypeptide reads, in one-letter code: Diaminopimelate epimerase (329 aa).

Residues asparagine 14 and asparagine 73 each coordinate substrate. The active-site Proton donor is cysteine 82. Substrate-binding positions include 83–84, asparagine 170, asparagine 206, and 224–225; these read GN and ER. The active-site Proton acceptor is cysteine 233. 234 to 235 contacts substrate; the sequence is GT.

It belongs to the diaminopimelate epimerase family. As to quaternary structure, homodimer.

Its subcellular location is the cytoplasm. The catalysed reaction is (2S,6S)-2,6-diaminopimelate = meso-2,6-diaminopimelate. The protein operates within amino-acid biosynthesis; L-lysine biosynthesis via DAP pathway; DL-2,6-diaminopimelate from LL-2,6-diaminopimelate: step 1/1. Catalyzes the stereoinversion of LL-2,6-diaminopimelate (L,L-DAP) to meso-diaminopimelate (meso-DAP), a precursor of L-lysine and an essential component of the bacterial peptidoglycan. In Listeria monocytogenes serotype 4a (strain HCC23), this protein is Diaminopimelate epimerase.